Reading from the N-terminus, the 225-residue chain is UPF0173 metal-dependent hydrolase Fjoh_2786 (225 aa).

This sequence belongs to the UPF0173 family.

This Flavobacterium johnsoniae (strain ATCC 17061 / DSM 2064 / JCM 8514 / BCRC 14874 / CCUG 350202 / NBRC 14942 / NCIMB 11054 / UW101) (Cytophaga johnsonae) protein is UPF0173 metal-dependent hydrolase Fjoh_2786.